The primary structure comprises 1658 residues: Cortactin-binding protein 2 (1658 aa).

Disordered stretches follow at residues 1 to 24 (MATD…GATA), 203 to 235 (KTKT…SEFD), 348 to 437 (GAAL…LHPG), 451 to 475 (GNAN…SPTS), and 495 to 612 (RFTS…PPKP). Residues 119–276 (RKMQERMSTQ…EQLKRGNDSK (158 aa)) adopt a coiled-coil conformation. Basic and acidic residues predominate over residues 214-235 (SAEKRRSTEMEAQMEKQLSEFD). Residues 385–394 (GPSAGSASST) are compositionally biased toward low complexity. The span at 399 to 418 (NSTAPPTVQTPGIAPQSYSQ) shows a compositional bias: polar residues. Arg-495 bears the Asymmetric dimethylarginine mark. Residues 509 to 520 (AAPTGDGGTCPP) are compositionally biased toward low complexity. The segment covering 580–590 (TMASPPSSLPQ) has biased composition (polar residues). ANK repeat units follow at residues 706–736 (GRPT…DINY), 740–769 (DGHS…QVNA), 773–802 (NGFT…NINH), 806–835 (EGQT…DRSV), 839–868 (DGWT…PACR), and 909–939 (EGWT…EPER). A disordered region spans residues 1448–1478 (ESGAWRKVSTSPRKKSGRFSPPSWNKPGLSE). Position 1521 is a phosphoserine (Ser-1521). Disordered stretches follow at residues 1538 to 1595 (RSES…NSQS) and 1611 to 1642 (PRSK…NTKE). Residues 1539-1558 (SESDISKIADSRDDLRRFDG) show a composition bias toward basic and acidic residues. Polar residues-rich tracts occupy residues 1559 to 1569 (SRNNPAFSTVN) and 1581 to 1595 (PLSS…NSQS). A compositionally biased stretch (low complexity) spans 1619–1633 (SQNTKRSSSSSNTRQ).

As to quaternary structure, interacts with CTTN/cortactin SH3 domain. Interacts with STRN, STRN4/zinedin and MOB4/phocein; this interactions mediate the association with the STRIPAK core complex and may regulate dendritic spine distribution of the STRIPAK complex in hippocampal neurons. Activation of glutamate receptors weakens the interaction with STRN and STRN4.

The protein localises to the cytoplasm. It localises to the cell cortex. It is found in the cell projection. Its subcellular location is the dendritic spine. Functionally, regulates the dendritic spine distribution of CTTN/cortactin in hippocampal neurons, and thus controls dendritic spinogenesis and dendritic spine maintenance. Associates with the striatin-interacting phosphatase and kinase (STRIPAK) core complex to regulate dendritic spine distribution of the STRIPAK complex in hippocampal neurons. This chain is Cortactin-binding protein 2 (CTTNBP2), found in Neofelis nebulosa (Clouded leopard).